The chain runs to 864 residues: Leucine--tRNA ligase (864 aa).

The 'HIGH' region motif lies at 42–52; that stretch reads PYPSGKLHMGH. Residues 624–628 carry the 'KMSKS' region motif; the sequence is KMSKS. K627 serves as a coordination point for ATP.

Belongs to the class-I aminoacyl-tRNA synthetase family.

Its subcellular location is the cytoplasm. The catalysed reaction is tRNA(Leu) + L-leucine + ATP = L-leucyl-tRNA(Leu) + AMP + diphosphate. This is Leucine--tRNA ligase from Burkholderia vietnamiensis (strain G4 / LMG 22486) (Burkholderia cepacia (strain R1808)).